Reading from the N-terminus, the 265-residue chain is Zwei Ig domain protein zig-1 (265 aa).

The N-terminal stretch at 1-17 (MKNLLLITFFVVSTVTA) is a signal peptide. The Extracellular segment spans residues 18–232 (LGGRGSKSAL…KMVDVRSEFQ (215 aa)). Ig-like C2-type domains are found at residues 41-108 (HATD…TPHG) and 120-220 (PVVH…MLLV). 2 N-linked (GlcNAc...) asparagine glycosylation sites follow: Asn-83 and Asn-193. Cys-155 and Cys-202 are disulfide-bonded. A helical transmembrane segment spans residues 233–253 (WVYPLAVILITIFLLVVIIVF). Topologically, residues 254–265 (CEWRNKKSTSKA) are cytoplasmic.

In terms of tissue distribution, expressed in neurons and body wall muscles.

It is found in the cell membrane. Functionally, probably not involved in maintaining the position of ASI and ASH head neuron cell bodies and ventral nerve cord axons of PVQ, PVP, RMEV, AVK and HSN neurons. In Caenorhabditis elegans, this protein is Zwei Ig domain protein zig-1.